Here is a 104-residue protein sequence, read N- to C-terminus: Phosphoribosyl-ATP pyrophosphatase (104 aa).

This sequence belongs to the PRA-PH family.

The protein resides in the cytoplasm. It catalyses the reaction 1-(5-phospho-beta-D-ribosyl)-ATP + H2O = 1-(5-phospho-beta-D-ribosyl)-5'-AMP + diphosphate + H(+). It functions in the pathway amino-acid biosynthesis; L-histidine biosynthesis; L-histidine from 5-phospho-alpha-D-ribose 1-diphosphate: step 2/9. The polypeptide is Phosphoribosyl-ATP pyrophosphatase (Streptococcus sanguinis (strain SK36)).